The chain runs to 134 residues: D-ribose pyranase (134 aa).

Histidine 20 serves as the catalytic Proton donor. Substrate contacts are provided by residues aspartate 28, histidine 101, and 123-125 (YSN).

Belongs to the RbsD / FucU family. RbsD subfamily. Homodecamer.

It is found in the cytoplasm. The catalysed reaction is beta-D-ribopyranose = beta-D-ribofuranose. The protein operates within carbohydrate metabolism; D-ribose degradation; D-ribose 5-phosphate from beta-D-ribopyranose: step 1/2. Functionally, catalyzes the interconversion of beta-pyran and beta-furan forms of D-ribose. This Pseudomonas syringae pv. syringae (strain B728a) protein is D-ribose pyranase.